The primary structure comprises 333 residues: Homeobox protein Hox-A1 (333 aa).

A disordered region spans residues Ile61 to Ser82. Residues Pro64–Pro74 are compositionally biased toward basic residues. The interval Pro74–Gln202 is interaction with OGT. Thr152 is a glycosylation site (O-linked (GlcNAc) threonine). The short motif at Thr203 to Lys208 is the Antp-type hexapeptide element. A DNA-binding region (homeobox) is located at residues Gln227–Glu286. The interval Arg279–His333 is disordered. Basic and acidic residues predominate over residues Ser301 to Glu310. The segment covering Lys311–His333 has biased composition (low complexity).

This sequence belongs to the Antp homeobox family. Labial subfamily. As to quaternary structure, interacts with OGT (via TPR repeats domain); the interaction takes place mainly in the nucleus. Forms a DNA-binding heterodimer with transcription factor PBX1. In terms of processing, glycosylated by OGT.

Its subcellular location is the nucleus. Its function is as follows. Sequence-specific transcription factor. Regulates multiple developmental processes including brainstem, inner and outer ear, abducens nerve and cardiovascular development and morphogenesis as well as cognition and behavior. Also part of a developmental regulatory system that provides cells with specific positional identities on the anterior-posterior axis. Acts on the anterior body structures. Seems to act in the maintenance and/or generation of hindbrain segments. Activates transcription in the presence of PBX1A and PKNOX1. The sequence is that of Homeobox protein Hox-A1 (Hoxa1) from Rattus norvegicus (Rat).